A 398-amino-acid chain; its full sequence is MNIHEYQGKQVLAKYGVAVLKGGVAYTPDEAVQVAKDLGGPVWVVKSQIHAGGRGAGRFKNDPNGKGGVRVAKSVEEVKTNVDQMLGQVLITKQTGPAGKEVKRVYIEQGCDIKRELYLSMLVDRATCRVTIVASTEGGMEIEEVAHNHPEKILKVAIDPVEGFQQYHGRQIAFGLGLEGKQVNTCVKFVGALYKAFMDLDCSIVEINPLVVTGAGELIALDAKVNFDDNALFRHKDIEELRDESEEDPAELEAARHSLNYIKLDGQIGCMVNGAGLAMATMDIIKLYGAEPANFLDVGGGATKERVTTAFKLILSDPNVEGILVNIFGGIMRCDVIAEGVVAAAREVSLNVPLVVRLEGTNVELGKKIMAQSGLPIIAADNLADAAEKVVKAVKEAA.

The 245-residue stretch at 9–253 (KQVLAKYGVA…ESEEDPAELE (245 aa)) folds into the ATP-grasp domain. ATP contacts are provided by residues lysine 46, 53-55 (GRG), glutamate 108, cysteine 111, and glutamate 116. Residues asparagine 208 and aspartate 222 each coordinate Mg(2+). Substrate-binding positions include asparagine 273 and 330 to 332 (GIM).

This sequence belongs to the succinate/malate CoA ligase beta subunit family. As to quaternary structure, heterotetramer of two alpha and two beta subunits. Requires Mg(2+) as cofactor.

It carries out the reaction succinate + ATP + CoA = succinyl-CoA + ADP + phosphate. The catalysed reaction is GTP + succinate + CoA = succinyl-CoA + GDP + phosphate. It participates in carbohydrate metabolism; tricarboxylic acid cycle; succinate from succinyl-CoA (ligase route): step 1/1. Succinyl-CoA synthetase functions in the citric acid cycle (TCA), coupling the hydrolysis of succinyl-CoA to the synthesis of either ATP or GTP and thus represents the only step of substrate-level phosphorylation in the TCA. The beta subunit provides nucleotide specificity of the enzyme and binds the substrate succinate, while the binding sites for coenzyme A and phosphate are found in the alpha subunit. The sequence is that of Succinate--CoA ligase [ADP-forming] subunit beta from Paramagnetospirillum magneticum (strain ATCC 700264 / AMB-1) (Magnetospirillum magneticum).